The sequence spans 546 residues: Chaperonin GroEL (546 aa).

ATP-binding positions include T30–P33, K51, D87–T91, G415, N479–A481, and D495. Positions D527 to M546 are disordered. Residues G536–M546 show a composition bias toward gly residues.

This sequence belongs to the chaperonin (HSP60) family. Forms a cylinder of 14 subunits composed of two heptameric rings stacked back-to-back. Interacts with the co-chaperonin GroES.

The protein resides in the cytoplasm. The enzyme catalyses ATP + H2O + a folded polypeptide = ADP + phosphate + an unfolded polypeptide.. Its function is as follows. Together with its co-chaperonin GroES, plays an essential role in assisting protein folding. The GroEL-GroES system forms a nano-cage that allows encapsulation of the non-native substrate proteins and provides a physical environment optimized to promote and accelerate protein folding. The sequence is that of Chaperonin GroEL from Acidovorax sp. (strain JS42).